We begin with the raw amino-acid sequence, 280 residues long: Polyamine aminopropyltransferase 2 (280 aa).

The PABS domain occupies 2–237; sequence ELWLDEALEL…GIIGFTYCSK (236 aa). Gln33 is a binding site for S-methyl-5'-thioadenosine. Spermidine is bound by residues His64 and Asp88. Residues Glu108 and 139 to 140 contribute to the S-methyl-5'-thioadenosine site; that span reads DG. Asp157 acts as the Proton acceptor in catalysis. 157 to 160 is a spermidine binding site; the sequence is DSSD. Position 164 (Pro164) interacts with S-methyl-5'-thioadenosine.

This sequence belongs to the spermidine/spermine synthase family. As to quaternary structure, homodimer or homotetramer.

Its subcellular location is the cytoplasm. The enzyme catalyses S-adenosyl 3-(methylsulfanyl)propylamine + putrescine = S-methyl-5'-thioadenosine + spermidine + H(+). The protein operates within amine and polyamine biosynthesis; spermidine biosynthesis; spermidine from putrescine: step 1/1. Catalyzes the irreversible transfer of a propylamine group from the amino donor S-adenosylmethioninamine (decarboxy-AdoMet) to putrescine (1,4-diaminobutane) to yield spermidine. This Leptospira interrogans serogroup Icterohaemorrhagiae serovar Lai (strain 56601) protein is Polyamine aminopropyltransferase 2.